The following is a 94-amino-acid chain: Translation initiation factor 1A 2 (94 aa).

The S1-like domain occupies 6 to 80 (GRRNLRMPSD…EKANIEWRYS (75 aa)).

The protein belongs to the eIF-1A family.

In terms of biological role, seems to be required for maximal rate of protein biosynthesis. Enhances ribosome dissociation into subunits and stabilizes the binding of the initiator Met-tRNA(I) to 40 S ribosomal subunits. This Haloquadratum walsbyi (strain DSM 16790 / HBSQ001) protein is Translation initiation factor 1A 2.